A 139-amino-acid chain; its full sequence is Cuticle protein 76 (139 aa).

6 repeat units span residues 7-10 (AAPA), 68-71 (AAPA), 75-78 (AAPV), 93-95 (AAP), 105-108 (AAPA), and 121-124 (AAPA).

Its function is as follows. Component of the cuticle of migratory locust which contains more than 100 different structural proteins. The polypeptide is Cuticle protein 76 (Locusta migratoria (Migratory locust)).